Consider the following 336-residue polypeptide: Tryptophan--tRNA ligase (336 aa).

Residues 13–15 and 21–22 each bind ATP; these read QPS and GN. The short motif at 14–22 is the 'HIGH' region element; the sequence is PSGNLTIGN. Asp140 contacts L-tryptophan. ATP is bound by residues 152–154, Ile191, and 200–204; these read GQD and KMSKS. The 'KMSKS' region signature appears at 200–204; that stretch reads KMSKS.

Belongs to the class-I aminoacyl-tRNA synthetase family. Homodimer.

It is found in the cytoplasm. It carries out the reaction tRNA(Trp) + L-tryptophan + ATP = L-tryptophyl-tRNA(Trp) + AMP + diphosphate + H(+). In terms of biological role, catalyzes the attachment of tryptophan to tRNA(Trp). The polypeptide is Tryptophan--tRNA ligase (Buchnera aphidicola subsp. Schizaphis graminum (strain Sg)).